We begin with the raw amino-acid sequence, 300 residues long: Transcription elongation factor A protein 2 (300 aa).

One can recognise a TFIIS N-terminal domain in the interval 6-83 (EEIARIARRL…KSWKKLLDAS (78 aa)). A Glycyl lysine isopeptide (Lys-Gly) (interchain with G-Cter in ubiquitin) cross-link involves residue Lys-58. A phosphoserine mark is found at Ser-60 and Ser-101. The segment at 84 to 131 (DAKARERRRGGSLPTSSSKEASEAQDPSRKRPELPRMPSTPRITTFPP) is disordered. The segment covering 103-117 (EASEAQDPSRKRPEL) has biased composition (basic and acidic residues). Residues 139–255 (VRTKCREMLT…EHQMARTGGT (117 aa)) enclose the TFIIS central domain. A TFIIS-type zinc finger spans residues 258–298 (DLFTCGKCRKKNCTYTQVQTRSSDEPMTTFVVCNECGNRWK). 4 residues coordinate Zn(2+): Cys-262, Cys-265, Cys-290, and Cys-293.

It belongs to the TFS-II family. Interacts with the basal transcription factor GTF2B. Interacts with REXO1.

It is found in the nucleus. Necessary for efficient RNA polymerase II transcription elongation past template-encoded arresting sites. The arresting sites in DNA have the property of trapping a certain fraction of elongating RNA polymerases that pass through, resulting in locked ternary complexes. Cleavage of the nascent transcript by S-II allows the resumption of elongation from the new 3'-terminus. This Bos taurus (Bovine) protein is Transcription elongation factor A protein 2 (TCEA2).